The following is a 1388-amino-acid chain: Dicer-like protein 2 (1388 aa).

Positions 23 to 203 (MLEASMKENI…LLMVESNLDA (181 aa)) constitute a Helicase ATP-binding domain. Residue 36–43 (MDTGSGKT) participates in ATP binding. The short motif at 144-147 (DEAH) is the DEAH box element. A Helicase C-terminal domain is found at 368-537 (KFESLLNFLD…DDERQLQSVS (170 aa)). Residues 564-658 (AMAHLHHFCA…LPLTKKPELK (95 aa)) enclose the Dicer dsRNA-binding fold domain. 2 consecutive RNase III domains span residues 906–1059 (ISAI…VDGG) and 1098–1281 (NDRL…VDSG). Mg(2+) contacts are provided by Glu-1137, Asp-1267, and Glu-1270.

The protein belongs to the helicase family. Dicer subfamily. Mg(2+) is required as a cofactor. Requires Mn(2+) as cofactor.

Dicer-like endonuclease involved in cleaving double-stranded RNA in the RNA interference (RNAi) pathway. Produces 21 to 25 bp dsRNAs (siRNAs) which target the selective destruction of homologous RNAs leading to sequence-specific suppression of gene expression, called post-transcriptional gene silencing (PTGS). Part of a broad host defense response against viral infection and transposons. This Aspergillus fumigatus (strain ATCC MYA-4609 / CBS 101355 / FGSC A1100 / Af293) (Neosartorya fumigata) protein is Dicer-like protein 2 (dcl2).